A 712-amino-acid chain; its full sequence is Exocyst complex component EXO70I (712 aa).

The signal sequence occupies residues 1 to 18 (MHKKQLMALLMVPQTSDS). A coiled-coil region spans residues 26 to 53 (LESAYSDLESLLRSSKQMEQNIETMETR). A glycan (N-linked (GlcNAc...) asparagine) is linked at Asn111.

Belongs to the EXO70 family. In terms of assembly, subunit of the exocyst complex that mediates vesicle tethering during exocytosis. Interacts with VPY at the periarbuscular membrane (PAM) around the arbuscule hyphal tips. Present at low levels in non-mycorrhizal root tips.

It is found in the cell membrane. Functionally, component of an exocyst subcomplex specifically required for periarbuscular membrane (PAM) biogenesis during arbuscular mycorrhizal (AM) symbiosis with AM fungi (e.g. Glomus versiforme), especially critical during the early branching phase of arbuscule development; probably involved in STR and STR2 delivery into the PAM. The polypeptide is Exocyst complex component EXO70I (Medicago truncatula (Barrel medic)).